The chain runs to 247 residues: Probable transcriptional regulatory protein ECA2494 (247 aa).

It belongs to the TACO1 family.

The protein localises to the cytoplasm. The sequence is that of Probable transcriptional regulatory protein ECA2494 from Pectobacterium atrosepticum (strain SCRI 1043 / ATCC BAA-672) (Erwinia carotovora subsp. atroseptica).